A 149-amino-acid polypeptide reads, in one-letter code: Nucleoside diphosphate kinase (149 aa).

6 residues coordinate ATP: lysine 9, phenylalanine 57, arginine 85, threonine 91, arginine 102, and asparagine 112. Histidine 115 serves as the catalytic Pros-phosphohistidine intermediate.

Belongs to the NDK family. Homotetramer. Requires Mg(2+) as cofactor.

The protein localises to the cytoplasm. It catalyses the reaction a 2'-deoxyribonucleoside 5'-diphosphate + ATP = a 2'-deoxyribonucleoside 5'-triphosphate + ADP. It carries out the reaction a ribonucleoside 5'-diphosphate + ATP = a ribonucleoside 5'-triphosphate + ADP. Functionally, major role in the synthesis of nucleoside triphosphates other than ATP. The ATP gamma phosphate is transferred to the NDP beta phosphate via a ping-pong mechanism, using a phosphorylated active-site intermediate. This Staphylococcus aureus (strain Mu3 / ATCC 700698) protein is Nucleoside diphosphate kinase.